We begin with the raw amino-acid sequence, 217 residues long: Small ribosomal subunit protein uS3 (217 aa).

One can recognise a KH type-2 domain in the interval 40–110 (IRELVNKSFT…EVYINIHEVR (71 aa)).

It belongs to the universal ribosomal protein uS3 family. As to quaternary structure, part of the 30S ribosomal subunit. Forms a tight complex with proteins S10 and S14.

Functionally, binds the lower part of the 30S subunit head. Binds mRNA in the 70S ribosome, positioning it for translation. This chain is Small ribosomal subunit protein uS3, found in Rickettsia bellii (strain OSU 85-389).